Here is a 186-residue protein sequence, read N- to C-terminus: Protein YABBY 2 (186 aa).

The segment at 17 to 44 adopts a C4-type zinc-finger fold; sequence CNFCNTIFAVSVPSNSMLNIVTVRCGHC.

The protein belongs to the YABBY family. As to expression, expressed in leaf blades, leaf sheaths and flowers.

The protein localises to the nucleus. The polypeptide is Protein YABBY 2 (YAB2) (Oryza sativa subsp. japonica (Rice)).